A 250-amino-acid polypeptide reads, in one-letter code: 3-deoxy-manno-octulosonate cytidylyltransferase (250 aa).

Belongs to the KdsB family.

It is found in the cytoplasm. It carries out the reaction 3-deoxy-alpha-D-manno-oct-2-ulosonate + CTP = CMP-3-deoxy-beta-D-manno-octulosonate + diphosphate. It participates in nucleotide-sugar biosynthesis; CMP-3-deoxy-D-manno-octulosonate biosynthesis; CMP-3-deoxy-D-manno-octulosonate from 3-deoxy-D-manno-octulosonate and CTP: step 1/1. Its pathway is bacterial outer membrane biogenesis; lipopolysaccharide biosynthesis. Its function is as follows. Activates KDO (a required 8-carbon sugar) for incorporation into bacterial lipopolysaccharide in Gram-negative bacteria. The sequence is that of 3-deoxy-manno-octulosonate cytidylyltransferase from Pectobacterium carotovorum subsp. carotovorum (strain PC1).